Consider the following 391-residue polypeptide: Alanine racemase (391 aa).

Catalysis depends on Lys-38, which acts as the Proton acceptor; specific for D-alanine. N6-(pyridoxal phosphate)lysine is present on Lys-38. Arg-136 is a binding site for substrate. The active-site Proton acceptor; specific for L-alanine is Tyr-267. Met-315 is a binding site for substrate.

It belongs to the alanine racemase family. It depends on pyridoxal 5'-phosphate as a cofactor.

The enzyme catalyses L-alanine = D-alanine. Its pathway is amino-acid biosynthesis; D-alanine biosynthesis; D-alanine from L-alanine: step 1/1. Functionally, catalyzes the interconversion of L-alanine and D-alanine. May also act on other amino acids. The protein is Alanine racemase (alr) of Clostridium kluyveri (strain ATCC 8527 / DSM 555 / NBRC 12016 / NCIMB 10680 / K1).